We begin with the raw amino-acid sequence, 431 residues long: Serine--tRNA ligase (431 aa).

Residue 237 to 239 (TAE) coordinates L-serine. 268–270 (RSE) is a binding site for ATP. E291 is an L-serine binding site. ATP is bound at residue 355 to 358 (EISS). An L-serine-binding site is contributed by S390.

The protein belongs to the class-II aminoacyl-tRNA synthetase family. Type-1 seryl-tRNA synthetase subfamily. As to quaternary structure, homodimer. The tRNA molecule binds across the dimer.

The protein localises to the cytoplasm. It catalyses the reaction tRNA(Ser) + L-serine + ATP = L-seryl-tRNA(Ser) + AMP + diphosphate + H(+). The catalysed reaction is tRNA(Sec) + L-serine + ATP = L-seryl-tRNA(Sec) + AMP + diphosphate + H(+). It functions in the pathway aminoacyl-tRNA biosynthesis; selenocysteinyl-tRNA(Sec) biosynthesis; L-seryl-tRNA(Sec) from L-serine and tRNA(Sec): step 1/1. Catalyzes the attachment of serine to tRNA(Ser). Is also able to aminoacylate tRNA(Sec) with serine, to form the misacylated tRNA L-seryl-tRNA(Sec), which will be further converted into selenocysteinyl-tRNA(Sec). This Neisseria meningitidis serogroup B (strain ATCC BAA-335 / MC58) protein is Serine--tRNA ligase.